Reading from the N-terminus, the 404-residue chain is Cysteine desulfurase IscS (404 aa).

Residues 75–76 (AT), asparagine 155, glutamine 183, and 203–205 (SGH) each bind pyridoxal 5'-phosphate. Lysine 206 is subject to N6-(pyridoxal phosphate)lysine. Residue threonine 243 coordinates pyridoxal 5'-phosphate. The Cysteine persulfide intermediate role is filled by cysteine 328. Cysteine 328 provides a ligand contact to [2Fe-2S] cluster.

The protein belongs to the class-V pyridoxal-phosphate-dependent aminotransferase family. NifS/IscS subfamily. Homodimer. Forms a heterotetramer with IscU, interacts with other sulfur acceptors. Pyridoxal 5'-phosphate serves as cofactor.

It localises to the cytoplasm. It carries out the reaction (sulfur carrier)-H + L-cysteine = (sulfur carrier)-SH + L-alanine. It functions in the pathway cofactor biosynthesis; iron-sulfur cluster biosynthesis. In terms of biological role, master enzyme that delivers sulfur to a number of partners involved in Fe-S cluster assembly, tRNA modification or cofactor biosynthesis. Catalyzes the removal of elemental sulfur and selenium atoms from cysteine and selenocysteine to produce alanine. Functions as a sulfur delivery protein for Fe-S cluster synthesis onto IscU, an Fe-S scaffold assembly protein, as well as other S acceptor proteins. Also functions as a selenium delivery protein in the pathway for the biosynthesis of selenophosphate. The chain is Cysteine desulfurase IscS from Salmonella gallinarum (strain 287/91 / NCTC 13346).